The sequence spans 162 residues: Protein hcp1 (162 aa).

This sequence belongs to the hcp1 family. In terms of assembly, hexamer. Three hcp1 monomers form two closely related hexameric rings with a 40 Angstrom internal diameter.

The protein resides in the secreted. Functionally, required for assembly of the protein secretion apparatus HSI-I. Actively secreted during chronic infection of cystic fibrosis patients. This chain is Protein hcp1 (hcp1), found in Pseudomonas aeruginosa (strain ATCC 15692 / DSM 22644 / CIP 104116 / JCM 14847 / LMG 12228 / 1C / PRS 101 / PAO1).